We begin with the raw amino-acid sequence, 455 residues long: Venom prothrombin activator nigrarin-D (455 aa).

Positions 1–20 (MAPPLLLCLILTFLWNLPEA) are cleaved as a signal peptide. Residues 21-40 (ESNVFLKSKVANRFLQRTKR) constitute a propeptide that is removed on maturation. A Gla domain is found at 41-86 (SNSIFEEFKAGNIERECIEEKCSKEEAREVFEDNEKTETFWNVYVD). Residues glutamate 46, glutamate 47, glutamate 54, glutamate 56, glutamate 59, glutamate 60, glutamate 65, glutamate 66, glutamate 69, glutamate 72, and glutamate 75 each carry the 4-carboxyglutamate modification. Cysteine 57 and cysteine 62 are joined by a disulfide. An EGF-like 1; calcium-binding domain is found at 86–122 (DGDQCSSNPCHYRGTCKDGIGSYTCTCLPNYEGKNCE). Intrachain disulfides connect cysteine 90-cysteine 101, cysteine 95-cysteine 110, cysteine 112-cysteine 121, cysteine 129-cysteine 140, cysteine 136-cysteine 149, cysteine 151-cysteine 164, cysteine 172-cysteine 328, cysteine 216-cysteine 221, cysteine 236-cysteine 252, cysteine 376-cysteine 390, and cysteine 401-cysteine 429. Residue serine 92 is glycosylated (O-linked (Hex...) serine). Residues 129–164 (CRVFNGNCWHFCKSVQNEIQCSCAESYRLGDDGHSC) enclose the EGF-like 2 domain. A propeptide spans 182–209 (REASLPDFVQSQKAILLKKSDNPSPDIR) (activation peptide). Residues 210–453 (IINGMDCKLG…FIPWIKAIMS (244 aa)) enclose the Peptidase S1 domain. Histidine 251 serves as the catalytic Charge relay system. The N-linked (GlcNAc...) asparagine glycan is linked to asparagine 254. Aspartate 308 serves as the catalytic Charge relay system. Serine 405 (charge relay system) is an active-site residue.

This sequence belongs to the peptidase S1 family. Snake venom subfamily. In terms of assembly, heterodimer of a light chain and a heavy chain; disulfide-linked. In terms of processing, the vitamin K-dependent, enzymatic carboxylation of some glutamate residues allows the modified protein to bind calcium. As to expression, expressed by the venom gland.

Its subcellular location is the secreted. The enzyme catalyses Selective cleavage of Arg-|-Thr and then Arg-|-Ile bonds in prothrombin to form thrombin.. Functionally, snake prothrombin activator that attacks the hemostatic system of prey. This protein is functionally similar to blood coagulation factor Xa. The protein is Venom prothrombin activator nigrarin-D of Cryptophis nigrescens (Eastern small-eyed snake).